Reading from the N-terminus, the 621-residue chain is Very-long-chain aldehyde decarbonylase GL1-5 (621 aa).

5 helical membrane passes run 99 to 119 (IILS…GQHL), 126 to 146 (GAGL…YWFH), 186 to 206 (LLFS…IIAF), 224 to 244 (FELV…LMYT), and 332 to 352 (MWPL…SFTV). The 135-residue stretch at 138–272 (VEFLYYWFHR…MPFYDYIYNT (135 aa)) folds into the Fatty acid hydroxylase domain.

Belongs to the sterol desaturase family. Homodimer.

The protein resides in the endoplasmic reticulum membrane. It carries out the reaction a long-chain fatty aldehyde + 2 NADPH + O2 + H(+) = a long-chain alkane + formate + 2 NADP(+) + H2O. Its function is as follows. Aldehyde decarbonylase involved in the conversion of aldehydes to alkanes. Core component of a very-long-chain alkane synthesis complex. The polypeptide is Very-long-chain aldehyde decarbonylase GL1-5 (Oryza sativa subsp. indica (Rice)).